The chain runs to 293 residues: HTH-type transcriptional regulator ArgP (293 aa).

The HTH lysR-type domain maps to 4–60 (PDYRTLQALDAVIRERGFERAAQKLCITQSAVSQRIKQLENLFGQPLLVRTIPPHPT). Residues 21 to 40 (FERAAQKLCITQSAVSQRIK) constitute a DNA-binding region (H-T-H motif).

It belongs to the LysR transcriptional regulatory family. As to quaternary structure, homodimer.

Controls the transcription of genes involved in arginine and lysine metabolism. The chain is HTH-type transcriptional regulator ArgP from Sodalis glossinidius (strain morsitans).